Reading from the N-terminus, the 284-residue chain is Bifunctional protein FolD (284 aa).

NADP(+) contacts are provided by residues 165-167, serine 190, and isoleucine 231; that span reads GAS.

It belongs to the tetrahydrofolate dehydrogenase/cyclohydrolase family. As to quaternary structure, homodimer.

The catalysed reaction is (6R)-5,10-methylene-5,6,7,8-tetrahydrofolate + NADP(+) = (6R)-5,10-methenyltetrahydrofolate + NADPH. The enzyme catalyses (6R)-5,10-methenyltetrahydrofolate + H2O = (6R)-10-formyltetrahydrofolate + H(+). Its pathway is one-carbon metabolism; tetrahydrofolate interconversion. In terms of biological role, catalyzes the oxidation of 5,10-methylenetetrahydrofolate to 5,10-methenyltetrahydrofolate and then the hydrolysis of 5,10-methenyltetrahydrofolate to 10-formyltetrahydrofolate. This Polynucleobacter asymbioticus (strain DSM 18221 / CIP 109841 / QLW-P1DMWA-1) (Polynucleobacter necessarius subsp. asymbioticus) protein is Bifunctional protein FolD.